The chain runs to 155 residues: Transcription antitermination protein NusB (155 aa).

It belongs to the NusB family.

Its function is as follows. Involved in transcription antitermination. Required for transcription of ribosomal RNA (rRNA) genes. Binds specifically to the boxA antiterminator sequence of the ribosomal RNA (rrn) operons. The sequence is that of Transcription antitermination protein NusB from Vibrio campbellii (strain ATCC BAA-1116).